Reading from the N-terminus, the 212-residue chain is Thiamine-phosphate synthase (212 aa).

Residues 40–44 (QFREK) and Asn-75 contribute to the 4-amino-2-methyl-5-(diphosphooxymethyl)pyrimidine site. Mg(2+)-binding residues include Asp-76 and Asp-95. 4-amino-2-methyl-5-(diphosphooxymethyl)pyrimidine is bound at residue Ser-113. Position 139–141 (139–141 (TPS)) interacts with 2-[(2R,5Z)-2-carboxy-4-methylthiazol-5(2H)-ylidene]ethyl phosphate. A 4-amino-2-methyl-5-(diphosphooxymethyl)pyrimidine-binding site is contributed by Lys-142. Residues Gly-171 and 191 to 192 (IS) each bind 2-[(2R,5Z)-2-carboxy-4-methylthiazol-5(2H)-ylidene]ethyl phosphate.

The protein belongs to the thiamine-phosphate synthase family. Mg(2+) is required as a cofactor.

The enzyme catalyses 2-[(2R,5Z)-2-carboxy-4-methylthiazol-5(2H)-ylidene]ethyl phosphate + 4-amino-2-methyl-5-(diphosphooxymethyl)pyrimidine + 2 H(+) = thiamine phosphate + CO2 + diphosphate. The catalysed reaction is 2-(2-carboxy-4-methylthiazol-5-yl)ethyl phosphate + 4-amino-2-methyl-5-(diphosphooxymethyl)pyrimidine + 2 H(+) = thiamine phosphate + CO2 + diphosphate. It carries out the reaction 4-methyl-5-(2-phosphooxyethyl)-thiazole + 4-amino-2-methyl-5-(diphosphooxymethyl)pyrimidine + H(+) = thiamine phosphate + diphosphate. It functions in the pathway cofactor biosynthesis; thiamine diphosphate biosynthesis; thiamine phosphate from 4-amino-2-methyl-5-diphosphomethylpyrimidine and 4-methyl-5-(2-phosphoethyl)-thiazole: step 1/1. Functionally, condenses 4-methyl-5-(beta-hydroxyethyl)thiazole monophosphate (THZ-P) and 2-methyl-4-amino-5-hydroxymethyl pyrimidine pyrophosphate (HMP-PP) to form thiamine monophosphate (TMP). The protein is Thiamine-phosphate synthase of Staphylococcus carnosus (strain TM300).